The chain runs to 908 residues: Glutamate receptor ionotropic, kainate 2 (908 aa).

Positions 1–31 are cleaved as a signal peptide; that stretch reads MQRIAGITKMVTHRRWLGLLLLLLCVGYSHG. The Extracellular portion of the chain corresponds to 32-561; it reads MPHVLRFGGI…VFSFLNPLSP (530 aa). Asn-67, Asn-73, Asn-275, Asn-378, Asn-412, Asn-423, and Asn-430 each carry an N-linked (GlcNAc...) asparagine glycan. Cys-96 and Cys-347 are oxidised to a cystine. The L-glutamate site is built by Pro-516, Ala-518, and Arg-523. The N-linked (GlcNAc...) asparagine glycan is linked to Asn-546. The chain crosses the membrane as a helical span at residues 562 to 582; that stretch reads DIWMYILLAYLGVSCVLFVIA. The Cytoplasmic portion of the chain corresponds to 583–638; that stretch reads RFSPYEWYNPHPCNPDSDVVENNFTLLNSFWFGVGALMQQGSELMPKALSTRIVGG. Residues 639 to 659 traverse the membrane as a helical segment; the sequence is IWWFFTLIIISSYTANLAAFL. The Extracellular segment spans residues 660–819; the sequence is TVERMESPID…KEASALGVQN (160 aa). L-glutamate is bound by residues Ser-689, Thr-690, and Glu-738. A disulfide bridge connects residues Cys-750 and Cys-804. The N-linked (GlcNAc...) asparagine glycan is linked to Asn-751. Residues 820–840 traverse the membrane as a helical segment; sequence IGGIFIVLAAGLVLSVFVAVG. Over 841 to 908 the chain is Cytoplasmic; that stretch reads EFLYKSKQNA…RRLPGKETMA (68 aa).

The protein belongs to the glutamate-gated ion channel (TC 1.A.10.1) family. GRIK2 subfamily. As to quaternary structure, homotetramer and heterotetramer with GRIK5. Tetramers may be formed by the dimerization of dimers.

Its subcellular location is the cell membrane. The protein localises to the postsynaptic cell membrane. It catalyses the reaction Ca(2+)(in) = Ca(2+)(out). The catalysed reaction is Na(+)(in) = Na(+)(out). Its activity is regulated as follows. Cold receptor activity activated by temperatures between 10-19 degrees Celsius. In terms of biological role, ionotropic glutamate receptor that functions as a cation-permeable ligand-gated ion channel, gated by L-glutamate and the glutamatergic agonist kainic acid. L-glutamate acts as an excitatory neurotransmitter at many synapses in the central nervous system. Binding of the excitatory neurotransmitter L-glutamate induces a conformation change, leading to the opening of the cation channel, and thereby converts the chemical signal to an electrical impulse. The receptor then desensitizes rapidly and enters a transient inactive state, characterized by the presence of bound agonist. Functionally, independent of its ionotropic glutamate receptor activity, acts as a thermoreceptor conferring sensitivity to cold temperatures. Functions in dorsal root ganglion neurons. The chain is Glutamate receptor ionotropic, kainate 2 from Danio rerio (Zebrafish).